We begin with the raw amino-acid sequence, 412 residues long: DNA replication and repair protein RecF (412 aa).

30-37 contacts ATP; sequence GANGAGKT. Residues 369-412 are disordered; that stretch reads LQVRPGGGTAAVTPDPEYARGEATAANGAASAPTGADAASTSRD. Residues 389 to 412 are compositionally biased toward low complexity; the sequence is GEATAANGAASAPTGADAASTSRD.

The protein belongs to the RecF family.

The protein localises to the cytoplasm. In terms of biological role, the RecF protein is involved in DNA metabolism; it is required for DNA replication and normal SOS inducibility. RecF binds preferentially to single-stranded, linear DNA. It also seems to bind ATP. The sequence is that of DNA replication and repair protein RecF from Salinibacter ruber (strain DSM 13855 / M31).